The chain runs to 198 residues: Protein LKAAEAR1 (198 aa).

The tract at residues 1-47 (MPTLGVKGARERDKNSASGAGAGAGAGAGAGEKHRKGPRTTDPPKTG) is disordered. Residues 20–30 (AGAGAGAGAGA) are compositionally biased toward gly residues.

The protein is Protein LKAAEAR1 (Lkaaear1) of Mus musculus (Mouse).